The chain runs to 241 residues: MSLTLLPAVDVRDGKAVRLRQGESGSETDYGSPFEAARTWVEAGAEWIHLVDLDAAFGTGNNRDQLREIVHELGDRVNIELSGGVRDDASLDAALEAGAARVNIGTAALENPDWTASVIKKYGDRVAVGLDVRGHTLAARGWTREGGDLFETMKFLDSVGCLRYVVTDVAKDGMMSGPNIQLLSEVAERTDAKVTASGGISKLDDLRAIKELAEIGVDSAILGKSLYARAFTLQEALEVAK.

The active-site Proton acceptor is Asp-10. Catalysis depends on Asp-131, which acts as the Proton donor.

The protein belongs to the HisA/HisF family.

The protein resides in the cytoplasm. The catalysed reaction is 1-(5-phospho-beta-D-ribosyl)-5-[(5-phospho-beta-D-ribosylamino)methylideneamino]imidazole-4-carboxamide = 5-[(5-phospho-1-deoxy-D-ribulos-1-ylimino)methylamino]-1-(5-phospho-beta-D-ribosyl)imidazole-4-carboxamide. The protein operates within amino-acid biosynthesis; L-histidine biosynthesis; L-histidine from 5-phospho-alpha-D-ribose 1-diphosphate: step 4/9. In Bifidobacterium longum (strain DJO10A), this protein is 1-(5-phosphoribosyl)-5-[(5-phosphoribosylamino)methylideneamino] imidazole-4-carboxamide isomerase.